We begin with the raw amino-acid sequence, 138 residues long: Mitochondrial import inner membrane translocase subunit tim-16 (138 aa).

Over residues 32–43 (TQQAAARHAAAT) the composition is skewed to low complexity. 2 disordered regions span residues 32-58 (TQQA…NANA) and 118-138 (LSRL…NSKE). A compositionally biased stretch (polar residues) spans 44-56 (GQSPSETKENANA). The interval 66-119 (ESLQILNVKTPLNREDVEKHYEHLFAINDKAKGGTFYLQSKVYRAKERIDEELS) is J-like.

The protein belongs to the TIM16/PAM16 family. Probable component of the PAM complex at least composed of a mitochondrial HSP70 protein, GrpE, tim-44, tim-16 and tim-14. Associates with the TIM23 complex.

It localises to the mitochondrion inner membrane. In terms of biological role, regulates ATP-dependent protein translocation into the mitochondrial matrix. The polypeptide is Mitochondrial import inner membrane translocase subunit tim-16 (Caenorhabditis briggsae).